A 474-amino-acid polypeptide reads, in one-letter code: PRAME family member 14 (474 aa).

5 LRR repeats span residues 15-38 (QSLL…LYLP), 204-229 (LNSI…CYLK), 271-294 (LLKI…LQNP), 319-342 (LGYL…PLGA), and 391-414 (MGAL…TYPA).

The protein belongs to the PRAME family.

This is PRAME family member 14 from Homo sapiens (Human).